A 627-amino-acid chain; its full sequence is BURP domain-containing protein 12 (627 aa).

The signal sequence occupies residues 1-25; the sequence is MASPPHLPLLLLLLVVVCNAAGGDG. Residues asparagine 119, asparagine 175, asparagine 251, asparagine 366, asparagine 384, and asparagine 530 are each glycosylated (N-linked (GlcNAc...) asparagine). The BURP domain maps to 415–626; it reads FFRETELVSG…FEGDMTWTVA (212 aa).

In terms of tissue distribution, expressed in stems, leaves, shoot and panicles.

The protein is BURP domain-containing protein 12 (BURP12) of Oryza sativa subsp. japonica (Rice).